Here is a 246-residue protein sequence, read N- to C-terminus: 1-(5-phosphoribosyl)-5-[(5-phosphoribosylamino)methylideneamino] imidazole-4-carboxamide isomerase (246 aa).

Asp8 acts as the Proton acceptor in catalysis. Asp130 (proton donor) is an active-site residue.

This sequence belongs to the HisA/HisF family.

It is found in the cytoplasm. It catalyses the reaction 1-(5-phospho-beta-D-ribosyl)-5-[(5-phospho-beta-D-ribosylamino)methylideneamino]imidazole-4-carboxamide = 5-[(5-phospho-1-deoxy-D-ribulos-1-ylimino)methylamino]-1-(5-phospho-beta-D-ribosyl)imidazole-4-carboxamide. The protein operates within amino-acid biosynthesis; L-histidine biosynthesis; L-histidine from 5-phospho-alpha-D-ribose 1-diphosphate: step 4/9. This chain is 1-(5-phosphoribosyl)-5-[(5-phosphoribosylamino)methylideneamino] imidazole-4-carboxamide isomerase, found in Halorhodospira halophila (strain DSM 244 / SL1) (Ectothiorhodospira halophila (strain DSM 244 / SL1)).